An 85-amino-acid polypeptide reads, in one-letter code: uncharacterized protein (85 aa).

It belongs to the ycf76 family.

The protein localises to the plastid. Its subcellular location is the chloroplast. This is an uncharacterized protein from Saccharum hybrid (Sugarcane).